The following is a 243-amino-acid chain: Uridylate kinase (243 aa).

Position 12-15 (12-15 (KLSG)) interacts with ATP. The interval 20 to 25 (GPGGSG) is involved in allosteric activation by GTP. Gly56 is a UMP binding site. 2 residues coordinate ATP: Gly57 and Arg61. UMP is bound by residues Asp76 and 137-144 (TGSPYFST). 3 residues coordinate ATP: Asn165, Tyr171, and Asp174.

The protein belongs to the UMP kinase family. Homohexamer.

The protein resides in the cytoplasm. It carries out the reaction UMP + ATP = UDP + ADP. The protein operates within pyrimidine metabolism; CTP biosynthesis via de novo pathway; UDP from UMP (UMPK route): step 1/1. With respect to regulation, allosterically activated by GTP. Inhibited by UTP. Catalyzes the reversible phosphorylation of UMP to UDP. This chain is Uridylate kinase, found in Oenococcus oeni (strain ATCC BAA-331 / PSU-1).